The chain runs to 895 residues: Isoleucine--tRNA ligase (895 aa).

Positions 57 to 67 match the 'HIGH' region motif; the sequence is PYANGSIHVGH. An L-isoleucyl-5'-AMP-binding site is contributed by glutamate 549. The short motif at 590–594 is the 'KMSKS' region element; the sequence is KMSKS. Lysine 593 contacts ATP. The Zn(2+) site is built by cysteine 869, cysteine 872, cysteine 888, and cysteine 891.

The protein belongs to the class-I aminoacyl-tRNA synthetase family. IleS type 1 subfamily. As to quaternary structure, monomer. Zn(2+) is required as a cofactor.

It localises to the cytoplasm. The enzyme catalyses tRNA(Ile) + L-isoleucine + ATP = L-isoleucyl-tRNA(Ile) + AMP + diphosphate. Its function is as follows. Catalyzes the attachment of isoleucine to tRNA(Ile). As IleRS can inadvertently accommodate and process structurally similar amino acids such as valine, to avoid such errors it has two additional distinct tRNA(Ile)-dependent editing activities. One activity is designated as 'pretransfer' editing and involves the hydrolysis of activated Val-AMP. The other activity is designated 'posttransfer' editing and involves deacylation of mischarged Val-tRNA(Ile). This is Isoleucine--tRNA ligase from Mycoplasma genitalium (strain ATCC 33530 / DSM 19775 / NCTC 10195 / G37) (Mycoplasmoides genitalium).